Consider the following 645-residue polypeptide: ATP-dependent DNA helicase Rep (645 aa).

Positions 1–280 constitute a UvrD-like helicase ATP-binding domain; sequence MSLNFSQKNA…IKMEHNYRSS (280 aa). Residues 22 to 29 and R278 each bind ATP; that span reads AGAGSGKT. The UvrD-like helicase C-terminal domain occupies 281 to 562; it reads GRILKAANSL…QLMTLHASKG (282 aa).

This sequence belongs to the helicase family. UvrD subfamily. Homodimer.

It catalyses the reaction Couples ATP hydrolysis with the unwinding of duplex DNA by translocating in the 3'-5' direction.. The catalysed reaction is ATP + H2O = ADP + phosphate + H(+). In terms of biological role, rep helicase is a single-stranded DNA-dependent ATPase involved in DNA replication; it can initiate unwinding at a nick in the DNA. It binds to the single-stranded DNA and acts in a progressive fashion along the DNA in the 3' to 5' direction. This chain is ATP-dependent DNA helicase Rep, found in Buchnera aphidicola subsp. Acyrthosiphon pisum (strain APS) (Acyrthosiphon pisum symbiotic bacterium).